The sequence spans 324 residues: NADH-dependent D-xylose reductase (324 aa).

Tyrosine 54 (proton donor) is an active-site residue. Position 116 (histidine 116) interacts with substrate. 220–286 is a binding site for NAD(+); the sequence is SSFGPQSFLE…SNSPDRMAQN (67 aa).

This sequence belongs to the aldo/keto reductase family.

The catalysed reaction is xylitol + NAD(+) = D-xylose + NADH + H(+). It catalyses the reaction xylitol + NADP(+) = D-xylose + NADPH + H(+). It functions in the pathway carbohydrate metabolism; D-xylose degradation. Functionally, reduces D-xylose into xylitol. Preferentially utilizes NADH as a cosubstrate. The protein is NADH-dependent D-xylose reductase (XYL1) of Candida parapsilosis (Yeast).